Here is a 349-residue protein sequence, read N- to C-terminus: Core protein VP7 (349 aa).

N-linked (GlcNAc...) asparagine; by host glycosylation occurs at N287.

This sequence belongs to the orbivirus VP7 family. In terms of assembly, homotrimer that assemble in a complex of 260 capsomers on an inner scaffold composed of VP3.

Its subcellular location is the virion. In terms of biological role, the VP7 protein is one of the five proteins (with VP1, VP3, VP4, and VP6) which form the inner capsid of the virus. The sequence is that of Core protein VP7 (Segment-7) from Antilocapra americana (Pronghorn).